The sequence spans 376 residues: Transcription initiation factor IIA subunit 1 (376 aa).

Ala-2 bears the N-acetylalanine mark. Composition is skewed to low complexity over residues 69–79 and 89–105; these read QVQQQHQPQQQ and QAQPQQTVPQQAQTQQV. 3 disordered regions span residues 69 to 107, 247 to 266, and 274 to 329; these read QVQQQHQPQQQQHHHHHHHQQAQPQQTVPQQAQTQQVLI, QAQITATGQQQPQAQPAQTQ, and DGTG…QELF. Ser-280, Ser-281, Ser-316, and Ser-321 each carry phosphoserine; by TAF1. Residues 280-329 are compositionally biased toward acidic residues; sequence SSEEDEDEEEDYDDDEEEDKEKDGAEDGQVEEEPLNSEDDVSDEEGQELF. Residues His-343 and Arg-344 each coordinate DNA.

Belongs to the TFIIA subunit 1 family. As to quaternary structure, TFIIA is a heterodimer of the large unprocessed subunit 1 and a small subunit gamma. It was originally believed to be a heterotrimer of an alpha (p35), a beta (p19) and a gamma subunit (p12). TFIIA forms a complex with TBP. Part of TBP-based Pol II pre-initiation complex (PIC), in which Pol II core assembles with general transcription factors and other specific initiation factors including GTF2E1, GTF2E2, GTF2F1, GTF2F2, TCEA1, ERCC2, ERCC3, GTF2H2, GTF2H3, GTF2H4, GTF2H5, GTF2A1, GTF2A2, GTF2B and TBP; this large multi-subunit PIC complex mediates DNA unwinding and targets Pol II core to the transcription start site where the first phosphodiester bond forms. In terms of processing, the alpha and beta subunits are postranslationally produced from the precursor form by TASP1. The cleavage promotes proteasomal degradation.

It localises to the nucleus. Functionally, TFIIA is a component of the transcription machinery of RNA polymerase II and plays an important role in transcriptional activation. TFIIA in a complex with TBP mediates transcriptional activity. The chain is Transcription initiation factor IIA subunit 1 (GTF2A1) from Homo sapiens (Human).